Consider the following 237-residue polypeptide: Lectin alpha chain (237 aa).

Residues Glu-8 and Asp-10 each contribute to the Mn(2+) site. Residues Asp-10, Tyr-12, Asn-14, and Asp-19 each coordinate Ca(2+). Tyr-12 lines the a carbohydrate pocket. Mn(2+) is bound by residues Asp-19, His-24, and Ser-34. An a carbohydrate-binding site is contributed by 99 to 100; sequence LY. Asp-208 is a Ca(2+) binding site. Arg-228 contributes to the a carbohydrate binding site.

It belongs to the leguminous lectin family. As to quaternary structure, homotetramer. In terms of processing, the beta and gamma chains are produced by partial proteolytic processing of the lectin alpha chain by an asparaginyl endopeptidase. Mixture of 60% alpha lectin and 40% of its beta and gamma proteolytic fragments.

Functionally, D-mannose/D-glucose-binding lectin. Has anti-inflammatory activity in rats. Induces histamine release in mast cells from rat. Induces lymphocyte proliferation and IFNG production. Shows toxicity against the aquatic snail B.glabrata at concentrations higher than 50 ug/ml. This is Lectin alpha chain from Dioclea grandiflora (Mucana).